Here is a 34-residue protein sequence, read N- to C-terminus: COP9 signalosome complex subunit 5a (34 aa).

This sequence belongs to the peptidase M67A family. CSN5 subfamily. As to quaternary structure, component of the CSN complex, probably composed of CSN1, CSN2, CSN3, CSN4, CSN5 (CSN5A or CSN5B), CSN6 (CSN6A or CSN6B), CSN7 and CSN8. A divalent metal cation serves as cofactor.

The protein localises to the cytoplasm. The protein resides in the nucleus. Probable protease subunit of the COP9 signalosome complex (CSN), a complex involved in various cellular and developmental processes such as photomorphogenesis and auxin and jasmonate responses. The CSN complex is an essential regulator of the ubiquitin (Ubl) conjugation pathway by mediating the deneddylation of the cullin subunits of the SCF-type E3 ligase complexes, leading to decrease the Ubl ligase activity of SCF. In the complex, it probably acts as the catalytic center that mediates the cleavage of Nedd8 from cullins. It however has no metalloprotease activity by itself and requires the other subunits of the CSN complex. The CSN complex is involved in repression of photomorphogenesis in darkness by regulating the activity of COP1-containing Ubl ligase complexes. This chain is COP9 signalosome complex subunit 5a (CSN5A), found in Brassica oleracea (Wild cabbage).